Reading from the N-terminus, the 255-residue chain is Hydroxyethylthiazole kinase (255 aa).

Met38 contributes to the substrate binding site. Residues Arg114 and Thr160 each coordinate ATP. Gly187 contributes to the substrate binding site.

The protein belongs to the Thz kinase family. Mg(2+) serves as cofactor.

It catalyses the reaction 5-(2-hydroxyethyl)-4-methylthiazole + ATP = 4-methyl-5-(2-phosphooxyethyl)-thiazole + ADP + H(+). It functions in the pathway cofactor biosynthesis; thiamine diphosphate biosynthesis; 4-methyl-5-(2-phosphoethyl)-thiazole from 5-(2-hydroxyethyl)-4-methylthiazole: step 1/1. Catalyzes the phosphorylation of the hydroxyl group of 4-methyl-5-beta-hydroxyethylthiazole (THZ). This Lysinibacillus sphaericus (strain C3-41) protein is Hydroxyethylthiazole kinase.